The following is a 37-amino-acid chain: Cytochrome b6-f complex subunit 5 (37 aa).

Residues 5–25 (FLFGIVLGLIPITLAGLFVTA) traverse the membrane as a helical segment.

The protein belongs to the PetG family. In terms of assembly, the 4 large subunits of the cytochrome b6-f complex are cytochrome b6, subunit IV (17 kDa polypeptide, PetD), cytochrome f and the Rieske protein, while the 4 small subunits are PetG, PetL, PetM and PetN. The complex functions as a dimer.

It is found in the plastid. Its subcellular location is the chloroplast thylakoid membrane. Functionally, component of the cytochrome b6-f complex, which mediates electron transfer between photosystem II (PSII) and photosystem I (PSI), cyclic electron flow around PSI, and state transitions. PetG is required for either the stability or assembly of the cytochrome b6-f complex. The chain is Cytochrome b6-f complex subunit 5 from Platanus occidentalis (Sycamore).